The sequence spans 415 residues: Protrudin (415 aa).

A disordered region spans residues 1–24 (MQTSDRDLSGPEASPSGMPEVLSE). At 1–66 (MQTSDRDLSG…AGDGVRYLLR (66 aa)) the chain is on the cytoplasmic side. The tract at residues 1-92 (MQTSDRDLSG…LFLTLNEGAW (92 aa)) is sufficient for homooligomerization. Positions 1 to 210 (MQTSDRDLSG…LYLLPLCWVL (210 aa)) are sufficient for localization to endoplasmic reticulum tubular network and for interactions with REEP1, REEP5, ATL1, ATL2, ATL3 and SPAST. The necessary for interaction with RAB11A and function in neurite outgrowth stretch occupies residues 51–64 (LEPLKDAGDGVRYL). The chain crosses the membrane as a helical span at residues 67 to 87 (WQMPLCSLLTCLGLNILFLTL). N88 is a topological domain (lumenal). The chain crosses the membrane as a helical span at residues 89–109 (EGAWYSMGALMISVPALLGYL). The Cytoplasmic portion of the chain corresponds to 110–192 (QEVCRGQLPE…NPVVSSQFYG (83 aa)). An intramembrane region (helical) is located at residues 193–213 (ALLGMVCMLYLLPLCWVLALL). The Cytoplasmic portion of the chain corresponds to 214 to 415 (NSTLFLGNGD…CASCNQTLSK (202 aa)). Residues 254-290 (QGAGGRGLLDSSPAPTPTEDLTPGSVEEAEEAEPDEE) form a disordered region. Residues 275 to 365 (TPGSVEEAEE…GCAATFSVLK (91 aa)) form a necessary for interaction with KIF5A region. A compositionally biased stretch (acidic residues) spans 280-290 (EEAEEAEPDEE). Residues 290–296 (EFKDAIE) form a necessary for interaction with VAPA region. An FYVE-type zinc finger spans residues 348-414 (TNNFGNCAGC…VCASCNQTLS (67 aa)). Zn(2+) contacts are provided by C354, C357, C370, C373, C378, C381, C406, and C409.

In terms of assembly, can form homooligomers (monomers, dimers and tetramers). Interacts with RAB11A (GDP-bound form); regulates RAB11A. Interacts with FKBP8; may negatively regulate ZFYVE27 phosphorylation. Isoform 1 interacts to a greater extent than isoform 2 with VAPB (via MSP domain). Isoform 1 interacts to a greater extent than isoform 2 with VAPA (via MSP domain). Interaction with VAPA may regulate ZFYVE27 retention in the endoplasmic reticulum and its function in cell projections formation. Interacts with ATL2, ATL3, SPAST and RTN3. Interacts with REEP1, REEP5 and ATL1. Interacts with RAB11B (GDP-bound form), SURF4, KIF5B and KIF5C. Isoform 1 and 2 interact with KIFA. In terms of processing, phosphorylated. Phosphorylation is induced by NGF through the MAPK/ERK pathway and modulates interaction with RAB11A. As to expression, astrocytes express both isoform 1 and isoform 2 and oligodendrocytes express only isoform 2 (at protein level). Isoform 1 is expressed specifically in the central nervous system and selectively in neuronal cells. Isoform 2 is expressed in cerebrum, cerebellum, spinal cord, heart, thymus, spleen, intestine and lung.

Its subcellular location is the recycling endosome membrane. The protein localises to the endoplasmic reticulum membrane. It is found in the cell projection. The protein resides in the growth cone membrane. Its function is as follows. Key regulator of RAB11-dependent vesicular trafficking during neurite extension through polarized membrane transport. Promotes axonal elongation and contributes to the establishment of neuronal cell polarity. Involved in nerve growth factor-induced neurite formation in VAPA-dependent manner. Contributes to both the formation and stabilization of the tubular ER network. Involved in ER morphogenesis by regulating the sheet-to-tubule balance and possibly the density of tubule interconnections. Acts as an adapter protein that facilitates the interaction of KIF5A with VAPA, VAPB, SURF4, RAB11A, RAB11B and RTN3 and the ZFYVE27-KIF5A complex contributes to the transport of these proteins in neurons. Can induce formation of neurite-like membrane protrusions in non-neuronal cells in a KIF5A/B-dependent manner. The sequence is that of Protrudin (Zfyve27) from Mus musculus (Mouse).